The following is a 242-amino-acid chain: 1-(5-phosphoribosyl)-5-[(5-phosphoribosylamino)methylideneamino] imidazole-4-carboxamide isomerase (242 aa).

Asp-8 acts as the Proton acceptor in catalysis. Asp-129 functions as the Proton donor in the catalytic mechanism.

It belongs to the HisA/HisF family.

Its subcellular location is the cytoplasm. The enzyme catalyses 1-(5-phospho-beta-D-ribosyl)-5-[(5-phospho-beta-D-ribosylamino)methylideneamino]imidazole-4-carboxamide = 5-[(5-phospho-1-deoxy-D-ribulos-1-ylimino)methylamino]-1-(5-phospho-beta-D-ribosyl)imidazole-4-carboxamide. Its pathway is amino-acid biosynthesis; L-histidine biosynthesis; L-histidine from 5-phospho-alpha-D-ribose 1-diphosphate: step 4/9. This chain is 1-(5-phosphoribosyl)-5-[(5-phosphoribosylamino)methylideneamino] imidazole-4-carboxamide isomerase, found in Clostridium botulinum (strain Langeland / NCTC 10281 / Type F).